The chain runs to 413 residues: Multifunctional CCA protein (413 aa).

Residues glycine 8 and arginine 11 each coordinate ATP. Glycine 8 and arginine 11 together coordinate CTP. The Mg(2+) site is built by glutamate 21 and aspartate 23. Positions 91, 137, and 140 each coordinate ATP. CTP-binding residues include arginine 91, arginine 137, and arginine 140. One can recognise an HD domain in the interval threonine 228–phenylalanine 329.

The protein belongs to the tRNA nucleotidyltransferase/poly(A) polymerase family. Bacterial CCA-adding enzyme type 1 subfamily. In terms of assembly, monomer. Can also form homodimers and oligomers. The cofactor is Mg(2+). Ni(2+) is required as a cofactor.

The enzyme catalyses a tRNA precursor + 2 CTP + ATP = a tRNA with a 3' CCA end + 3 diphosphate. It catalyses the reaction a tRNA with a 3' CCA end + 2 CTP + ATP = a tRNA with a 3' CCACCA end + 3 diphosphate. Catalyzes the addition and repair of the essential 3'-terminal CCA sequence in tRNAs without using a nucleic acid template. Adds these three nucleotides in the order of C, C, and A to the tRNA nucleotide-73, using CTP and ATP as substrates and producing inorganic pyrophosphate. tRNA 3'-terminal CCA addition is required both for tRNA processing and repair. Also involved in tRNA surveillance by mediating tandem CCA addition to generate a CCACCA at the 3' terminus of unstable tRNAs. While stable tRNAs receive only 3'-terminal CCA, unstable tRNAs are marked with CCACCA and rapidly degraded. The chain is Multifunctional CCA protein from Alkalilimnicola ehrlichii (strain ATCC BAA-1101 / DSM 17681 / MLHE-1).